A 478-amino-acid polypeptide reads, in one-letter code: Protein nucleotidyltransferase YdiU (478 aa).

ATP contacts are provided by G84, G86, R87, K107, D119, G120, R170, and R177. Residue D246 is the Proton acceptor of the active site. Mg(2+)-binding residues include N247 and D256. Residue D256 coordinates ATP.

This sequence belongs to the SELO family. The cofactor is Mg(2+). Mn(2+) is required as a cofactor.

The enzyme catalyses L-seryl-[protein] + ATP = 3-O-(5'-adenylyl)-L-seryl-[protein] + diphosphate. It catalyses the reaction L-threonyl-[protein] + ATP = 3-O-(5'-adenylyl)-L-threonyl-[protein] + diphosphate. It carries out the reaction L-tyrosyl-[protein] + ATP = O-(5'-adenylyl)-L-tyrosyl-[protein] + diphosphate. The catalysed reaction is L-histidyl-[protein] + UTP = N(tele)-(5'-uridylyl)-L-histidyl-[protein] + diphosphate. The enzyme catalyses L-seryl-[protein] + UTP = O-(5'-uridylyl)-L-seryl-[protein] + diphosphate. It catalyses the reaction L-tyrosyl-[protein] + UTP = O-(5'-uridylyl)-L-tyrosyl-[protein] + diphosphate. Nucleotidyltransferase involved in the post-translational modification of proteins. It can catalyze the addition of adenosine monophosphate (AMP) or uridine monophosphate (UMP) to a protein, resulting in modifications known as AMPylation and UMPylation. In Escherichia coli (strain K12 / MC4100 / BW2952), this protein is Protein nucleotidyltransferase YdiU.